The following is a 350-amino-acid chain: S-adenosylmethionine:tRNA ribosyltransferase-isomerase (350 aa).

This sequence belongs to the QueA family. Monomer.

Its subcellular location is the cytoplasm. It carries out the reaction 7-aminomethyl-7-carbaguanosine(34) in tRNA + S-adenosyl-L-methionine = epoxyqueuosine(34) in tRNA + adenine + L-methionine + 2 H(+). It participates in tRNA modification; tRNA-queuosine biosynthesis. Functionally, transfers and isomerizes the ribose moiety from AdoMet to the 7-aminomethyl group of 7-deazaguanine (preQ1-tRNA) to give epoxyqueuosine (oQ-tRNA). The sequence is that of S-adenosylmethionine:tRNA ribosyltransferase-isomerase from Vibrio parahaemolyticus serotype O3:K6 (strain RIMD 2210633).